The chain runs to 415 residues: MNEVLAKGIKAKEVARELVLKSTEQKNEALSAIADQLILETAYILEENKRDIEEGKAKGFSDSLLDRLLLTENRIIDMTEGIKQLIELRDPVGECVSAWERPNGLSIQEMRVPLGVIGMIYEARPNVTVDAATICLKTGNAVILRGSSSAIHSNKAIVAVIHRALKLTSLPQESVQLIEDTTRNSAKQLFTMKDYLDVLIPRGGKQLIDTVVREASVPVLETGAGNCHIFIDETADKQMAFNIIINAKTQRPSVCNAIETIVLHENWAEQYGSELFSSLKERGVELRGDNKAVAIDSSILLATEEDWETEFLSLTLAVKVVSTVEEAIHHINTYGSMHSEAIITENEENVSKFFTSVDAAALYHNASTRFTDGSEFGFGAEIGISTQKLHVRGPMGLPALTSTKYVIRGNGQIRK.

Belongs to the gamma-glutamyl phosphate reductase family.

Its subcellular location is the cytoplasm. The enzyme catalyses L-glutamate 5-semialdehyde + phosphate + NADP(+) = L-glutamyl 5-phosphate + NADPH + H(+). It functions in the pathway amino-acid biosynthesis; L-proline biosynthesis; L-glutamate 5-semialdehyde from L-glutamate: step 2/2. In terms of biological role, catalyzes the NADPH-dependent reduction of L-glutamate 5-phosphate into L-glutamate 5-semialdehyde and phosphate. The product spontaneously undergoes cyclization to form 1-pyrroline-5-carboxylate. The polypeptide is Gamma-glutamyl phosphate reductase (Bacillus cereus (strain B4264)).